Here is a 367-residue protein sequence, read N- to C-terminus: 2,6-dihydropseudooxynicotine hydrolase (367 aa).

Residues Glu-148, Ser-217, Asp-300, and His-329 contribute to the active site.

This sequence belongs to the AB hydrolase superfamily. In terms of assembly, homodimer.

It catalyses the reaction 2,6-dihydroxypseudooxynicotine + H2O = 2,6-dihydroxypyridine + 4-(methylamino)butanoate + H(+). The protein operates within alkaloid degradation; nicotine degradation; 2,6-dihydroxypyridine and 4-(methylamino)butanoate from 6-hydroxypseudooxynicotine: step 2/2. Its function is as follows. L-nicotine is used as a growth substrate. Plays a role in nicotine catabolism by cleaving a C-C bond in 2,6-dihydroxypseudooxynicotine. In Paenarthrobacter nicotinovorans (Arthrobacter nicotinovorans), this protein is 2,6-dihydropseudooxynicotine hydrolase.